A 270-amino-acid chain; its full sequence is Probable aquaporin NIP-type (270 aa).

2 helical membrane passes run 45 to 65 (LIAEAIGTYFVIFAGCGSVAV) and 72 to 92 (VTFPGICVTWGLIVMVMVYTV). The NPA 1 motif lies at 101–103 (NPA). 3 helical membrane-spanning segments follow: residues 121-141 (LYIIAQLMGSILASGTLALLF), 160-180 (SLAIEIIISFLLMFVISGVAT), and 188-208 (VAGIAVGMTITLNVFVAGPIS). Residues 213-215 (NPA) carry the NPA 2 motif. The chain crosses the membrane as a helical span at residues 231–251 (WVYVVGPIIGTLAGAFVYNLI).

Belongs to the MIP/aquaporin (TC 1.A.8) family. NIP (TC 1.A.8.12) subfamily. As to expression, pollen specific.

It localises to the membrane. In terms of biological role, aquaporins facilitate the transport of water and small neutral solutes across cell membranes. The sequence is that of Probable aquaporin NIP-type from Nicotiana alata (Winged tobacco).